A 308-amino-acid polypeptide reads, in one-letter code: CMP-N-acetylneuraminate:beta-galactoside alpha-2,3-sialyltransferase (308 aa).

Catalysis depends on Asp201, which acts as the Proton acceptor. CMP-N-acetyl-beta-neuraminate is bound by residues 221–225 (LPHPR), 242–243 (FE), and 262–263 (SS). The active-site Proton donor is His223.

It belongs to the glycosyltransferase 52 family. Divalent metal cations are not required for the alpha-2,3-sialyltransferase activity. is required as a cofactor.

Functionally, catalyzes the transfer of sialic acid from the substrate CMP-N-acetylneuraminate to lactosyl lipids as preferred acceptor substrates in vitro, forming alpha-2,3-linked sialosides. Beta-1,4-linked galactosyl lipids are better substrates than beta-1,3-linked galactosyl lipids. The natural acceptor substrate may be cell surface oligosaccharides in lipooligosaccharide (LOS), whose sialylation has been demonstrated vital for the virulence of P.multocida. This chain is CMP-N-acetylneuraminate:beta-galactoside alpha-2,3-sialyltransferase (lst), found in Pasteurella multocida (strain Pm70).